The chain runs to 998 residues: Poly [ADP-ribose] polymerase 1 (998 aa).

PARP-type zinc fingers lie at residues 1–78 (AKSG…ETGG) and 99–189 (FAAE…PAVK). Zn(2+) contacts are provided by cysteine 8, cysteine 11, histidine 40, cysteine 43, cysteine 111, cysteine 114, histidine 145, and cysteine 148. The segment at 185-211 (LPAVKNEGKRKADEVDGHSAATKKKIK) is disordered. Over residues 190 to 201 (NEGKRKADEVDG) the composition is skewed to basic and acidic residues. 2 consecutive short sequence motifs (nuclear localization signal) follow at residues 193–195 (KRK) and 207–212 (KKKIKK). Residues 211 to 345 (KKEKEKESKL…FKRHDRAFPP (135 aa)) enclose the PADR1 zinc-binding domain. Residues 276-318 (GALLPCEECSGQFVFKGDAYYCTGDLSAWTKCVAKTQTPNRKD) are zinc ribbon. Zn(2+) is bound by residues cysteine 281, cysteine 284, cysteine 297, and cysteine 307. The segment covering 348–361 (APTPISPPAAPEPK) has biased composition (pro residues). The tract at residues 348–370 (APTPISPPAAPEPKPTVEETFPE) is disordered. Residues 357–507 (APEPKPTVEE…GSNKSEKKMK (151 aa)) are automodification domain. The 92-residue stretch at 369–460 (PEGKPLTNTK…SVQELLSQFG (92 aa)) folds into the BRCT domain. PolyADP-ribosyl glutamic acid occurs at positions 391, 397, 419, 428, 429, 445, 447, 454, 467, 471, 477, 495, 496, and 503. The disordered stretch occupies residues 471-510 (EAVQPTEKQPSSGPVAGKSSGKVKEEKGSNKSEKKMKLTV). Residues 492 to 506 (KVKEEKGSNKSEKKM) are compositionally biased toward basic and acidic residues. The WGR domain maps to 525-621 (SCHVLETGGK…PNFTKYPKKF (97 aa)). One can recognise a PARP alpha-helical domain in the interval 645–762 (KSKLAKPVQE…DIEVAYSLLR (118 aa)). In terms of domain architecture, PARP catalytic spans 771 to 997 (DPIDVKYEKI…LKFNYKGGMM (227 aa)). NAD(+)-binding positions include 845 to 847 (HGS), glycine 854, arginine 861, and serine 887. Residue glutamate 971 is the For poly [ADP-ribose] polymerase activity of the active site.

This sequence belongs to the ARTD/PARP family. As to quaternary structure, homodimer; PARP-type zinc-fingers from separate parp1 molecules form a dimer module that specifically recognizes DNA strand breaks. Post-translationally, poly-ADP-ribosylated on serine, glutamate and aspartate residues by autocatalysis. Auto-ADP-ribosylation on serine takes place following interaction with HPF1. Auto poly-ADP-ribosylation on serine residues promotes its dissociation from chromatin.

The protein resides in the chromosome. It is found in the nucleus. The protein localises to the nucleolus. Its subcellular location is the cytoplasm. It localises to the cytosol. The enzyme catalyses NAD(+) + (ADP-D-ribosyl)n-acceptor = nicotinamide + (ADP-D-ribosyl)n+1-acceptor + H(+).. It carries out the reaction L-seryl-[protein] + NAD(+) = O-(ADP-D-ribosyl)-L-seryl-[protein] + nicotinamide + H(+). The catalysed reaction is L-aspartyl-[protein] + NAD(+) = 4-O-(ADP-D-ribosyl)-L-aspartyl-[protein] + nicotinamide. It catalyses the reaction L-glutamyl-[protein] + NAD(+) = 5-O-(ADP-D-ribosyl)-L-glutamyl-[protein] + nicotinamide. The enzyme catalyses L-tyrosyl-[protein] + NAD(+) = O-(ADP-D-ribosyl)-L-tyrosyl-[protein] + nicotinamide + H(+). It carries out the reaction L-histidyl-[protein] + NAD(+) = N(tele)-(ADP-D-ribosyl)-L-histidyl-[protein] + nicotinamide + H(+). With respect to regulation, ADP-ribosyltransferase activity is regulated via an allosteric activation mechanism. In absence of activation signal, parp1 is autoinhibited by the PARP alpha-helical domain (also named HD region), which prevents effective NAD(+)-binding. Activity is highly stimulated by signals, such as DNA strand breaks. Binding to damaged DNA unfolds the PARP alpha-helical domain, relieving autoinhibition. Poly-ADP-ribosyltransferase activity is tightly regulated and parp1 is removed from damaged chromatin following initial poly-ADP-ribosylation of chromatin to avoid prolonged residence (trapping) that has cytotoxic consequences. A number of factors or post-translational modifications (auto-poly-ADP-ribosylation) promote parp1 removal from chromatin. Its function is as follows. Poly-ADP-ribosyltransferase that mediates poly-ADP-ribosylation of proteins and plays a key role in DNA repair. Mediates glutamate, aspartate, serine, histidine or tyrosine ADP-ribosylation of proteins: the ADP-D-ribosyl group of NAD(+) is transferred to the acceptor carboxyl group of target residues and further ADP-ribosyl groups are transferred to the 2'-position of the terminal adenosine moiety, building up a polymer with an average chain length of 20-30 units. Serine ADP-ribosylation of proteins constitutes the primary form of ADP-ribosylation of proteins in response to DNA damage. Specificity for the different amino acids is conferred by interacting factors, such as hpf1 and nmnat1. Following interaction with hpf1, catalyzes serine ADP-ribosylation of target proteins; hpf1 confers serine specificity by completing the parp1 active site. Also catalyzes tyrosine ADP-ribosylation of target proteins following interaction with hpf1. Following interaction with nmnat1, catalyzes glutamate and aspartate ADP-ribosylation of target proteins; nmnat1 confers glutamate and aspartate specificity. Parp1 initiates the repair of DNA breaks: recognizes and binds DNA breaks within chromatin and recruits hpf1, licensing serine ADP-ribosylation of target proteins, such as histones (H2BS6ADPr and H3S10ADPr), thereby promoting decompaction of chromatin and the recruitment of repair factors leading to the reparation of DNA strand breaks. In addition to base excision repair (BER) pathway, also involved in double-strand breaks (DSBs) repair. Mediates the poly-ADP-ribosylation of a number of proteins. In addition to proteins, also able to ADP-ribosylate DNA: catalyzes ADP-ribosylation of DNA strand break termini containing terminal phosphates and a 2'-OH group in single- and double-stranded DNA, respectively. Parp1-mediated DNA repair in neurons plays a role in sleep: senses DNA damage in neurons and promotes sleep, facilitating efficient DNA repair. In addition to DNA repair, also involved in other processes, such as transcription regulation, programmed cell death, membrane repair, adipogenesis and innate immunity. Acts as a repressor of transcription: binds to nucleosomes and modulates chromatin structure in a manner similar to histone H1, thereby altering RNA polymerase II. Acts both as a positive and negative regulator of transcription elongation, depending on the context. Poly-ADP-ribose chains generated by parp1 also play a role in poly-ADP-ribose-dependent cell death, a process named parthanatos. Also acts as a negative regulator of the cGAS-STING pathway by mediating poly-ADP-ribosylation and inactivation of cgas. Acts as a negative regulator of adipogenesis by catalyzing poly ADP-ribosylation of histone H2B on 'Glu-35' (H2BE35ADPr). The sequence is that of Poly [ADP-ribose] polymerase 1 (parp1) from Xenopus laevis (African clawed frog).